A 772-amino-acid polypeptide reads, in one-letter code: Cadherin-19 (772 aa).

The N-terminal stretch at 1–21 (MNCYLLLRFMLGIPLLWPCLG) is a signal peptide. A propeptide spanning residues 22–43 (ATENSQTKKVKQPVRSHLRVKR) is cleaved from the precursor. Cadherin domains are found at residues 44-148 (GWVW…EPKF), 149-256 (LDEP…KPIF), 257-370 (KESL…PPLF), 371-470 (LLPY…APEF), and 470-581 (FSQY…STQT). Topologically, residues 44-596 (GWVWNQFFVP…LVLSMGFKTE (553 aa)) are extracellular. N-linked (GlcNAc...) asparagine glycans are attached at residues N57 and N74. N419, N437, N508, N515, N516, and N534 each carry an N-linked (GlcNAc...) asparagine glycan. Residues 597 to 617 (VIIAILICIMIIFGFIFLTLG) form a helical membrane-spanning segment. Over 618-772 (LKQRRKQILF…MFGSAVQSNN (155 aa)) the chain is Cytoplasmic.

Expressed in many tissues, with the exception of uterus.

Its subcellular location is the cell membrane. Functionally, cadherins are calcium-dependent cell adhesion proteins. They preferentially interact with themselves in a homophilic manner in connecting cells; cadherins may thus contribute to the sorting of heterogeneous cell types. This chain is Cadherin-19 (CDH19), found in Homo sapiens (Human).